The sequence spans 393 residues: Asparagine--oxo-acid transaminase (393 aa).

Positions 39, 126, and 176 each coordinate L-asparagine. Residue Lys-239 is modified to N6-(pyridoxal phosphate)lysine. Residue Arg-370 coordinates L-asparagine.

It belongs to the class-I pyridoxal-phosphate-dependent aminotransferase family. It depends on pyridoxal 5'-phosphate as a cofactor.

It catalyses the reaction a 2-oxocarboxylate + L-asparagine = 2-oxosuccinamate + an L-alpha-amino acid. The enzyme catalyses L-asparagine + 2-oxoglutarate = 2-oxosuccinamate + L-glutamate. Catalyzes the transamination reaction between L-asparagine and 2-oxoglutarate to produce L-glutamate and 2-oxosuccinamate. Is not active with pyruvate as amine acceptor. May also use other amino acids as substrates. This chain is Asparagine--oxo-acid transaminase, found in Streptococcus mutans serotype c (strain ATCC 700610 / UA159).